Reading from the N-terminus, the 35-residue chain is Photosystem II reaction center protein Psb30 (35 aa).

The chain crosses the membrane as a helical span at residues 7-27 (VFVQLALLALIVLAGPAVILL).

Belongs to the Psb30/Ycf12 family. As to quaternary structure, PSII is composed of 1 copy each of membrane proteins PsbA, PsbB, PsbC, PsbD, PsbE, PsbF, PsbH, PsbI, PsbJ, PsbK, PsbL, PsbM, PsbT, PsbX, PsbY, PsbZ, Psb30/Ycf12, peripheral proteins PsbO, CyanoQ (PsbQ), PsbU, PsbV and a large number of cofactors. It forms dimeric complexes.

The protein resides in the cellular thylakoid membrane. In terms of biological role, a core subunit of photosystem II (PSII), probably helps stabilize the reaction center. This is Photosystem II reaction center protein Psb30 from Synechococcus sp. (strain JA-2-3B'a(2-13)) (Cyanobacteria bacterium Yellowstone B-Prime).